The primary structure comprises 2299 residues: Acetyl-CoA carboxylase dmxL1 (2299 aa).

A compositionally biased stretch (low complexity) spans 21 to 39 (TSIPASVPASAPPSSSAPH). Positions 21-41 (TSIPASVPASAPPSSSAPHAA) are disordered. The 509-residue stretch at 75–583 (VITNVLIANN…TTGWLDELIT (509 aa)) folds into the Biotin carboxylation domain. The 198-residue stretch at 227 to 424 (QVAIDADGIV…LPAAQLQIAM (198 aa)) folds into the ATP-grasp 1 domain. 258-315 (AKEIGFPVMIKASEGGGGKGIRKCEQEEGFEALYNAASSEIPGSPIFIMKLAGNARHL) serves as a coordination point for ATP. Mg(2+) is bound by residues E381, E395, and N397. Residues E381, E395, and N397 each contribute to the Mn(2+) site. A Biotinyl-binding domain is found at 710-784 (LEQENDPTQL…EPGDVLGILT (75 aa)). An N6-biotinyllysine modification is found at K751. The tract at residues 1159–1208 (DMEMSSQLSTPSTPATPPTPPYENGKQSKGVGSISDMSNLIENPDKEPTR) is disordered. The region spanning 1539-1887 (PTKALEWLQP…KKNTLVPIGP (349 aa)) is the CoA carboxyltransferase N-terminal domain. The CoA carboxyltransferase C-terminal domain maps to 1891–2205 (PWDRDIVCSP…EEHILKRIAT (315 aa)).

The cofactor is biotin. Mg(2+) serves as cofactor. Mn(2+) is required as a cofactor.

The catalysed reaction is hydrogencarbonate + acetyl-CoA + ATP = malonyl-CoA + ADP + phosphate + H(+). It carries out the reaction N(6)-biotinyl-L-lysyl-[protein] + hydrogencarbonate + ATP = N(6)-carboxybiotinyl-L-lysyl-[protein] + ADP + phosphate + H(+). Its pathway is secondary metabolite biosynthesis. It participates in lipid metabolism; malonyl-CoA biosynthesis; malonyl-CoA from acetyl-CoA: step 1/1. Functionally, acetyl-CoA carboxylase; part of the gene cluster that mediates the biosynthesis of the dimeric xanthones cryptosporioptides. The pathway begins with the synthesis of atrochrysone thioester by the polyketide synthase dmx-nrPKS. The atrochrysone carboxyl ACP thioesterase dmxR1 then breaks the thioester bond and releases the atrochrysone carboxylic acid from dmx-nrPKS. Atrochrysone carboxylic acid is decarboxylated by the decarboxylase dmxR15, and oxidized by the anthrone oxygenase dmxR16 to yield emodin. Emodin is then reduced to emodin hydroquinone by the oxidoreductase dmxR7. A-ring reduction by the short chain dehydrogenase dmxR18, dehydration by the scytalone dehydratase-like protein dmxR17 and probable spontaneous re-oxidation, results in overall deoxygenation to chrysophanol. Baeyer-Villiger oxidation by the Baeyer-Villiger monooxygenase (BVMO) dmxR6 then yields monodictylactone in equilibrium with monodictyphenone. In the case of the cryptosporioptides biosynthesis, monodictylactone is reduced at C-12 to an alcohol (by the short chain dehydrogenases dmxR12 or dmxR8) and hydroxylated at C-5 by dmxR9, yielding the electron-rich aromatic which could eliminate H(2)O to form the ortho-quinonemethide, followed by tautomerisation to paraquinone and complete the formal reduction to produce the 10-methylgroup. Conjugate addition of C-4a-OH to the resulting paraquinone by the monooxygenase dmxR10 then gives cyclohexadienone, which is then reduced at C-5 by the short chain dehydrogenase dmxR3 to give the dihydroxanthone. The 6,7-epoxide in the cryptosporioptides could be introduced by the cytochrome P450 monooxygenase dmxL3. The highly reducing PKS dmxL2 manufactures butyrate, which is further carboxylated by dmxL1 to form ethylmalonate. It is not yet clear whether the carboxylation occurs while the butyrate is attached to the ACP of dmxL2, but this unusual fungal metabolite could then be esterified to O-5 by the O-acetyltransferase dmxR13. Finally, dimerization performed by dmxR5 gives the observed dimers cryptosporioptides A, B and C as the final products of the pathway. The polypeptide is Acetyl-CoA carboxylase dmxL1 (Cryptosporiopsis sp. (strain 8999)).